The primary structure comprises 215 residues: Adenylate kinase (215 aa).

10 to 15 (GAGKGT) is an ATP binding site. The segment at 30–59 (STGDILRDAVSKGTELGKMAKAIMDRGELV) is NMP. Residues T31, R36, 57–59 (ELV), 82–85 (GYPR), and Q89 each bind AMP. Positions 123-160 (NRRVCPNCGKVYNLITLQPKEDEKCDVCGTKLIQRDDD) are LID. R124 is a binding site for ATP. Zn(2+) contacts are provided by C127 and C130. 133-134 (VY) contacts ATP. Residues C147 and C150 each coordinate Zn(2+). AMP-binding residues include R157 and R168. Q196 is a binding site for ATP.

It belongs to the adenylate kinase family. In terms of assembly, monomer.

The protein resides in the cytoplasm. It carries out the reaction AMP + ATP = 2 ADP. Its pathway is purine metabolism; AMP biosynthesis via salvage pathway; AMP from ADP: step 1/1. Catalyzes the reversible transfer of the terminal phosphate group between ATP and AMP. Plays an important role in cellular energy homeostasis and in adenine nucleotide metabolism. In Petrotoga mobilis (strain DSM 10674 / SJ95), this protein is Adenylate kinase.